Consider the following 83-residue polypeptide: Apolipoprotein C-I, basic form (83 aa).

Positions 1–26 (MRLFLSLPVLVVVLSMVLEGPAPAQG) are cleaved as a signal peptide.

The protein belongs to the apolipoprotein C1 family.

The protein localises to the secreted. Inhibitor of lipoprotein binding to the low density lipoprotein (LDL) receptor, LDL receptor-related protein, and very low density lipoprotein (VLDL) receptor. Associates with high density lipoproteins (HDL) and the triacylglycerol-rich lipoproteins in the plasma and makes up about 10% of the protein of the VLDL and 2% of that of HDL. Appears to interfere directly with fatty acid uptake and is also the major plasma inhibitor of cholesteryl ester transfer protein (CETP). Binds free fatty acids and reduces their intracellular esterification. Modulates the interaction of APOE with beta-migrating VLDL and inhibits binding of beta-VLDL to the LDL receptor-related protein. The polypeptide is Apolipoprotein C-I, basic form (APOC1B) (Cercocebus atys (Sooty mangabey)).